A 65-amino-acid chain; its full sequence is Large ribosomal subunit protein bL33c (65 aa).

Belongs to the bacterial ribosomal protein bL33 family.

It localises to the plastid. The protein localises to the chloroplast. The protein is Large ribosomal subunit protein bL33c (rpl33) of Porphyra purpurea (Red seaweed).